The sequence spans 146 residues: Large ribosomal subunit protein bL19 (146 aa).

The segment at 119–146 (DYRKKGEKGVEKVETTPVSADIETQVAE) is disordered.

Belongs to the bacterial ribosomal protein bL19 family.

This protein is located at the 30S-50S ribosomal subunit interface and may play a role in the structure and function of the aminoacyl-tRNA binding site. The polypeptide is Large ribosomal subunit protein bL19 (Bartonella tribocorum (strain CIP 105476 / IBS 506)).